A 443-amino-acid chain; its full sequence is F-box only protein 39 (443 aa).

An F-box domain is found at 16-61 (WATLPDVCLRRVFWWLGDRDRSRAALVCRKWNQMMYSADLWRYRTI).

Directly interacts with SKP1 and CUL1.

Substrate-recognition component of the SCF (SKP1-CUL1-F-box protein)-type E3 ubiquitin ligase complex. This chain is F-box only protein 39 (FBXO39), found in Bos taurus (Bovine).